The primary structure comprises 556 residues: Formate--tetrahydrofolate ligase (556 aa).

An ATP-binding site is contributed by 65-72 (TPAGEGKS).

The protein belongs to the formate--tetrahydrofolate ligase family.

It catalyses the reaction (6S)-5,6,7,8-tetrahydrofolate + formate + ATP = (6R)-10-formyltetrahydrofolate + ADP + phosphate. It functions in the pathway one-carbon metabolism; tetrahydrofolate interconversion. In Streptococcus pneumoniae (strain ATCC 700669 / Spain 23F-1), this protein is Formate--tetrahydrofolate ligase.